The following is a 536-amino-acid chain: Small conductance calcium-activated potassium channel protein 1 (536 aa).

The tract at residues 1 to 90 (MSSRSHNGSV…KPPTVSHRLG (90 aa)) is disordered. The segment covering 65 to 75 (QEEEEEEEDED) has biased composition (acidic residues). A helical membrane pass occupies residues 107–127 (LIFGMFGIVVMVTETELSWGV). The helical transmembrane segment at 136 to 156 (FALKCLISLSTVILLGLVILY) threads the bilayer. A helical membrane pass occupies residues 224–244 (VLLSIPMFLRLYLLARVMLLH). The helical transmembrane segment at 273–293 (LMTICPGTVLLVFSISSWIVA) threads the bilayer. Residues 313 to 333 (FLGAMWLISITFLSIGYGDMV) form a helical membrane-spanning segment. An intramembrane region (pore-forming) is located at residues 342 to 362 (VCLLTGIMGAGCTALVVAVVA). The segment at 380–459 (DTQLTKRVKN…LADLAKAQSI (80 aa)) is calmodulin-binding. The chain crosses the membrane as a helical span at residues 487–507 (VLGASLQALPSLIAQAICPLP). The interval 514-536 (SHLTTAAQSPQSHWLPTTASDCG) is disordered. Polar residues predominate over residues 515-536 (HLTTAAQSPQSHWLPTTASDCG).

It belongs to the potassium channel KCNN family. KCa2.1/KCNN1 subfamily. In terms of assembly, homodimer. Heteromultimer with KCNN2 and KCNN3. The complex is composed of 4 channel subunits each of which binds to a calmodulin subunit which regulates the channel activity through calcium-binding. Interacts with calmodulin. Widely expressed including brain.

The protein resides in the membrane. It is found in the cytoplasm. It localises to the myofibril. Its subcellular location is the sarcomere. The protein localises to the z line. The enzyme catalyses K(+)(in) = K(+)(out). Inhibited by bee venom neurotoxin apamin. Inhibited by d-tubocurarine and tetraethylammonium (TEA). Its function is as follows. Small conductance calcium-activated potassium channel that mediates the voltage-independent transmembrane transfer of potassium across the cell membrane through a constitutive interaction with calmodulin which binds the intracellular calcium allowing its opening. The current is characterized by a voltage-independent activation, an intracellular calcium concentration increase-dependent activation and a single-channel conductance of about 3 picosiemens. Also presents an inwardly rectifying current, thus reducing its already small outward conductance of potassium ions, which is particularly the case when the membrane potential displays positive values, above + 20 mV. Activation is followed by membrane hyperpolarization. Thought to regulate neuronal excitability by contributing to the slow component of synaptic afterhyperpolarization. This is Small conductance calcium-activated potassium channel protein 1 from Rattus norvegicus (Rat).